The chain runs to 78 residues: Large ribosomal subunit protein bL28 (78 aa).

A disordered region spans residues M1 to A21.

Belongs to the bacterial ribosomal protein bL28 family.

The protein is Large ribosomal subunit protein bL28 of Cellvibrio japonicus (strain Ueda107) (Pseudomonas fluorescens subsp. cellulosa).